The chain runs to 187 residues: MAQERREGGRGREREERDDGMVDKLVHINRVAKVVKGGRRFGFAALVVVGDQKGRVGFGHGKAREVPEAIRKATESAKRDMIFVPLRSGRTLHHDVEGRWGAGRVLLRAAKQGTGIIAGGPMRAVFETLGMHDVVAKSMGSSNPYNMVRATFDALKSQMHPKDVAAARGIKYSTLQARRGTAVAAEE.

In terms of domain architecture, S5 DRBM spans 21–84 (MVDKLVHINR…ESAKRDMIFV (64 aa)).

The protein belongs to the universal ribosomal protein uS5 family. Part of the 30S ribosomal subunit. Contacts proteins S4 and S8.

In terms of biological role, with S4 and S12 plays an important role in translational accuracy. Located at the back of the 30S subunit body where it stabilizes the conformation of the head with respect to the body. In Mesorhizobium japonicum (strain LMG 29417 / CECT 9101 / MAFF 303099) (Mesorhizobium loti (strain MAFF 303099)), this protein is Small ribosomal subunit protein uS5.